Consider the following 192-residue polypeptide: Peptidyl-tRNA hydrolase (192 aa).

Tyr-17 is a tRNA binding site. Residue His-22 is the Proton acceptor of the active site. TRNA-binding residues include Phe-68, Asn-70, and Asn-116.

This sequence belongs to the PTH family. As to quaternary structure, monomer.

It localises to the cytoplasm. It carries out the reaction an N-acyl-L-alpha-aminoacyl-tRNA + H2O = an N-acyl-L-amino acid + a tRNA + H(+). Hydrolyzes ribosome-free peptidyl-tRNAs (with 1 or more amino acids incorporated), which drop off the ribosome during protein synthesis, or as a result of ribosome stalling. Its function is as follows. Catalyzes the release of premature peptidyl moieties from peptidyl-tRNA molecules trapped in stalled 50S ribosomal subunits, and thus maintains levels of free tRNAs and 50S ribosomes. The polypeptide is Peptidyl-tRNA hydrolase (Xylella fastidiosa (strain Temecula1 / ATCC 700964)).